Consider the following 309-residue polypeptide: Tagatose-6-phosphate kinase (309 aa).

Belongs to the carbohydrate kinase PfkB family. LacC subfamily.

It catalyses the reaction D-tagatofuranose 6-phosphate + ATP = D-tagatofuranose 1,6-bisphosphate + ADP + H(+). It participates in carbohydrate metabolism; D-tagatose 6-phosphate degradation; D-glyceraldehyde 3-phosphate and glycerone phosphate from D-tagatose 6-phosphate: step 1/2. This Streptococcus pneumoniae (strain Taiwan19F-14) protein is Tagatose-6-phosphate kinase.